We begin with the raw amino-acid sequence, 838 residues long: Sec1 family domain-containing protein MIP3 (838 aa).

Residues 637–677 (KSEETKEIPSDDQLDIDALDDDPWGKWGDEEEEEVDNSKAD) are disordered. Residues 646 to 658 (SDDQLDIDALDDD) are compositionally biased toward acidic residues.

It belongs to the STXBP/unc-18/SEC1 family. In terms of assembly, forms a complex with MAG2, ZW10/MIP1 and MIP2 on the endoplasmic reticulum.

It is found in the endoplasmic reticulum membrane. Required for proper maturation of seed storage proteins. Forms a complex with MAG2, ZW10/MIP1 and MIP2 on the endoplasmic reticulum that may be responsible for efficient transport of seed storage proteins. This chain is Sec1 family domain-containing protein MIP3, found in Arabidopsis thaliana (Mouse-ear cress).